Here is a 477-residue protein sequence, read N- to C-terminus: tRNA-2-methylthio-N(6)-dimethylallyladenosine synthase (477 aa).

Positions lysine 3–glycine 120 constitute an MTTase N-terminal domain. Cysteine 12, cysteine 49, cysteine 83, cysteine 157, cysteine 161, and cysteine 164 together coordinate [4Fe-4S] cluster. A Radical SAM core domain is found at lysine 143–arginine 375. Residues arginine 378–arginine 441 enclose the TRAM domain.

This sequence belongs to the methylthiotransferase family. MiaB subfamily. As to quaternary structure, monomer. [4Fe-4S] cluster serves as cofactor.

The protein resides in the cytoplasm. The enzyme catalyses N(6)-dimethylallyladenosine(37) in tRNA + (sulfur carrier)-SH + AH2 + 2 S-adenosyl-L-methionine = 2-methylsulfanyl-N(6)-dimethylallyladenosine(37) in tRNA + (sulfur carrier)-H + 5'-deoxyadenosine + L-methionine + A + S-adenosyl-L-homocysteine + 2 H(+). Catalyzes the methylthiolation of N6-(dimethylallyl)adenosine (i(6)A), leading to the formation of 2-methylthio-N6-(dimethylallyl)adenosine (ms(2)i(6)A) at position 37 in tRNAs that read codons beginning with uridine. This Pseudoalteromonas atlantica (strain T6c / ATCC BAA-1087) protein is tRNA-2-methylthio-N(6)-dimethylallyladenosine synthase.